Here is a 256-residue protein sequence, read N- to C-terminus: MSLLSKTRELNTLLQKHKGIAVDFKDVAQTISNVTVTNVFIVSRRGKILGSCLNELLKSERIKDMLEDRHIPREYTEELMNVKQTESNIDIDNELTVFPPENREVFLNSRTTIFPILGGGERLGTLVLGRVQDDFNENDLVLGEYAATVIGMEILREKHNEVEKEARDKAAITMAINSLSYSEKEAIEHIFEELGGTEGLLIASKVADRVGITRSVIVNALRKLESAGVIESRSLGMKGTFIKVKKDKFLDELEKK.

Positions 1–155 (MSLLSKTREL…AATVIGMEIL (155 aa)) are GAF domain. Positions 203–222 (ASKVADRVGITRSVIVNALR) form a DNA-binding region, H-T-H motif.

It belongs to the CodY family.

It is found in the cytoplasm. Its function is as follows. DNA-binding global transcriptional regulator which is involved in the adaptive response to starvation and acts by directly or indirectly controlling the expression of numerous genes in response to nutrient availability. During rapid exponential growth, CodY is highly active and represses genes whose products allow adaptation to nutrient depletion. This chain is Global transcriptional regulator CodY, found in Staphylococcus epidermidis (strain ATCC 35984 / DSM 28319 / BCRC 17069 / CCUG 31568 / BM 3577 / RP62A).